A 438-amino-acid chain; its full sequence is Putative permease HI_0125 (438 aa).

Helical transmembrane passes span 21 to 41 (IIAGLTTFLAMVYSVIVVPNM), 51 to 71 (SVFIATCLVAGLGSILIGLWA), 73 to 93 (APMAIGCAISLTAFTAFSLVI), 97 to 117 (VAIPVALGAVFLMGVVFTLIS), 137 to 157 (AGIGIGLFLLLIAANGVGLVV), 167 to 187 (LGDFTSFPVMMSLIGLALIIG), 195 to 215 (GGILWVIIAITIVGLIFDPNV), 238 to 258 (FMGALQPAILPVVFALVMTAV), 296 to 316 (LFSGLFGTAPAAVYIESAAGT), 326 to 346 (AIVVGVLFLLMLFFQPLAFLV), 347 to 367 (PGYATAPALMYVGLLMLSNVS), 386 to 406 (FIVLTANIVTGIMLGFAALVI), and 418 to 438 (NVGTVIIAIVLVAFYAGGWAI). 315 to 322 (GTAAGGKT) serves as a coordination point for ATP.

This sequence belongs to the nucleobase:cation symporter-2 (NCS2) (TC 2.A.40) family. Azg-like subfamily.

It localises to the cell membrane. This is Putative permease HI_0125 from Haemophilus influenzae (strain ATCC 51907 / DSM 11121 / KW20 / Rd).